Consider the following 265-residue polypeptide: Tryptophan synthase alpha chain (265 aa).

Residues glutamate 49 and aspartate 60 each act as proton acceptor in the active site.

This sequence belongs to the TrpA family. As to quaternary structure, tetramer of two alpha and two beta chains.

The catalysed reaction is (1S,2R)-1-C-(indol-3-yl)glycerol 3-phosphate + L-serine = D-glyceraldehyde 3-phosphate + L-tryptophan + H2O. It functions in the pathway amino-acid biosynthesis; L-tryptophan biosynthesis; L-tryptophan from chorismate: step 5/5. The alpha subunit is responsible for the aldol cleavage of indoleglycerol phosphate to indole and glyceraldehyde 3-phosphate. This chain is Tryptophan synthase alpha chain, found in Polynucleobacter necessarius subsp. necessarius (strain STIR1).